The chain runs to 638 residues: MKRRNFIQLSSLATIGMSLPSAGIVNACSSFPEQSLEFKNLTSELLKEWCDGMLKVQINNPSNLEEHGALRCPSCSHIHGRCMDAVYPFLYMADVSGDEKYIEAAKLVMIWAENNVSQENGAWTVIPNPKSWKGITIFGAIALAESLHYHSHILDDKTLKAWTNRLARAGQYIYDTFTIDFTNINYGGTAIYGLDIIGDVLGNGNFKEKSKKMAEEVQAFFTKNDYLLYGECKPEADKLSAKGLHGVDLGYNVEETLNSLVMYALKNDDQALLQIVTKSLNSHLEFMLPDGGWDNSWGNRMYKWTYWGSRTCDGSQPAFAMMAHINPAFGTAAVKNTELLKQCTANGLLHGGPHYISAGIPPCVHHTFTHAKPLAALLDHWKHLPEINKTTALPRVTANGIKHFKDLDVLLFSRGDWRGTVSAYDAEYHYKKDYRQATGGSLGILYHNKVGLLCAASMAVYNMVEPYNQQPQPGKDIALTPRIETFKEDQWYTNLYDLTANLEAIDTKEVINLASVVKLKNESRKMVSGTASEFHLTYSCAKEGLTIKVSTQQDILEPTAFVLPIASPEKEKVEFVNEHEIKISKPGGVVTIKANVPLKLKEYSGTRTFNMVPGLEALPIELFFETHIKELVLIVSVV.

A signal peptide spans 1 to 27; the sequence is MKRRNFIQLSSLATIGMSLPSAGIVNA.

The protein belongs to the polysaccharide lyase 37 family.

The protein resides in the periplasm. It catalyses the reaction Endolytic cleavage of (1-&gt;4)-beta-galactosaminic bonds between N-acetylgalactosamine and either D-glucuronic acid or L-iduronic acid to produce a mixture of Delta(4)-unsaturated oligosaccharides of different sizes that are ultimately degraded to Delta(4)-unsaturated tetra- and disaccharides.. The catalysed reaction is Elimination of sulfate, appears to act on linkages between N-acetyl-D-glucosamine and uronate. Product is an unsaturated sugar.. Broad-specificity lyase involved in ulvan degradation. Ulvan is the main polysaccharide component of the Ulvales (green seaweed) cell wall. It is composed of disaccharide building blocks comprising 3-sulfated rhamnose (Rha3S) linked to D-glucuronic acid (GlcA), L-iduronic acid (IduA), or D-xylose (Xyl). Ulvan lyase catalyzes the endolytic cleavage of the glycosidic bond between Rha3S and the uronic acids GlcA or IduA, producing oligosaccharides that have unsaturated 4-deoxy-L-threo-hex-4-enopyranosiduronic acid (deltaUA) at the non-reducing end. This results eventually in the degradation of the ulvan polysaccharide into deltaUA-Rha3S disaccharides and deltaUA-Rha3S-Xyl-Rha3S tetrasaccharides. It is also able to degrade the glycosaminoglycans heparan sulfate and chondroitin sulfate. Not active against pectin, xanthan or alginate. The polypeptide is Broad-specificity ulvan lyase (Formosa agariphila (strain DSM 15362 / KCTC 12365 / LMG 23005 / KMM 3901 / M-2Alg 35-1)).